Consider the following 304-residue polypeptide: Glutaminase (304 aa).

7 residues coordinate substrate: S63, N114, E158, N165, Y189, Y240, and V258.

It belongs to the glutaminase family. As to quaternary structure, homotetramer.

The enzyme catalyses L-glutamine + H2O = L-glutamate + NH4(+). This chain is Glutaminase, found in Shewanella baltica (strain OS155 / ATCC BAA-1091).